The following is a 318-amino-acid chain: Replication factor C small subunit (318 aa).

43 to 50 is an ATP binding site; that stretch reads GSVGTGKT.

It belongs to the activator 1 small subunits family. RfcS subfamily. Heteromultimer composed of small subunits (RfcS) and large subunits (RfcL).

In terms of biological role, part of the RFC clamp loader complex which loads the PCNA sliding clamp onto DNA. This is Replication factor C small subunit from Thermoplasma acidophilum (strain ATCC 25905 / DSM 1728 / JCM 9062 / NBRC 15155 / AMRC-C165).